We begin with the raw amino-acid sequence, 268 residues long: Homeobox protein Hox-D12 (268 aa).

Positions 102–124 are disordered; sequence TPDAPTASEERSRTRPPFAPESS. Positions 200–259 form a DNA-binding region, homeobox; that stretch reads ARKKRKPYTKQQIAELENEFLVNEFINRQKRKELSNRLNLSDQQVKIWFQNRRMKKKRVV.

Belongs to the Abd-B homeobox family.

Its subcellular location is the nucleus. Its function is as follows. Sequence-specific transcription factor which is part of a developmental regulatory system that provides cells with specific positional identities on the anterior-posterior axis. The sequence is that of Homeobox protein Hox-D12 (Hoxd12) from Mus musculus (Mouse).